A 230-amino-acid chain; its full sequence is Ureidoacrylate amidohydrolase RutB (230 aa).

Aspartate 24 (proton acceptor) is an active-site residue. Lysine 133 is an active-site residue. Cysteine 166 acts as the Nucleophile in catalysis.

This sequence belongs to the isochorismatase family. RutB subfamily.

It catalyses the reaction (Z)-3-ureidoacrylate + H2O + H(+) = (Z)-3-aminoacrylate + NH4(+) + CO2. The enzyme catalyses (Z)-3-ureidoacrylate + H2O = (Z)-3-aminoacrylate + carbamate + H(+). The catalysed reaction is (Z)-2-methylureidoacrylate + H2O + H(+) = (Z)-2-methylaminoacrylate + NH4(+) + CO2. In terms of biological role, hydrolyzes ureidoacrylate to form aminoacrylate and carbamate. The carbamate hydrolyzes spontaneously, thereby releasing one of the nitrogen atoms of the pyrimidine ring as ammonia and one of its carbon atoms as CO2. This is Ureidoacrylate amidohydrolase RutB from Escherichia coli O6:K15:H31 (strain 536 / UPEC).